Consider the following 233-residue polypeptide: Ribosomal RNA small subunit methyltransferase G (233 aa).

The tract at residues 1-25 (MASRQSPMAVSQPDHADRSAALQLT) is disordered. S-adenosyl-L-methionine is bound by residues Gly-85, Phe-90, and Arg-155.

Belongs to the methyltransferase superfamily. RNA methyltransferase RsmG family.

It is found in the cytoplasm. It carries out the reaction guanosine(527) in 16S rRNA + S-adenosyl-L-methionine = N(7)-methylguanosine(527) in 16S rRNA + S-adenosyl-L-homocysteine. Specifically methylates the N7 position of guanine in position 527 of 16S rRNA. This is Ribosomal RNA small subunit methyltransferase G from Rhodopseudomonas palustris (strain BisB5).